Here is a 90-residue protein sequence, read N- to C-terminus: Albumin (90 aa).

S5 bears the Phosphoserine mark. E6 and D13 together coordinate Ca(2+). Residues 25–90 (LLRHLVDEPQ…LVASTQAALA (66 aa)) form the Albumin domain. S61 bears the Phosphoserine mark. Residues T62 and T64 each carry the phosphothreonine modification. N6-methyllysine is present on K80.

Belongs to the ALB/AFP/VDB family. As to quaternary structure, interacts with FCGRT; this interaction regulates ALB homeostasis. Interacts with TASOR. In plasma, occurs in a covalently-linked complex with chromophore-bound alpha-1-microglobulin; this interaction does not prevent fatty acid binding to ALB. In terms of tissue distribution, plasma.

It is found in the secreted. In terms of biological role, binds water, Ca(2+), Na(+), K(+), fatty acids, hormones, bilirubin and drugs. Its main function is the regulation of the colloidal osmotic pressure of blood. Major zinc transporter in plasma, typically binds about 80% of all plasma zinc. Major calcium and magnesium transporter in plasma, binds approximately 45% of circulating calcium and magnesium in plasma. Potentially has more than two calcium-binding sites and might additionally bind calcium in a non-specific manner. The shared binding site between zinc and calcium suggests a crosstalk between zinc and calcium transport in the blood. The rank order of affinity is zinc &gt; calcium &gt; magnesium. Binds to the bacterial siderophore enterobactin and inhibits enterobactin-mediated iron uptake of E.coli from ferric transferrin, and may thereby limit the utilization of iron and growth of enteric bacteria such as E.coli. Does not prevent iron uptake by the bacterial siderophore aerobactin. The protein is Albumin of Capra hircus (Goat).